The sequence spans 380 residues: MAETNQPGKIFIGGLNIKTRQKTLQEIFGRFGPVARVILMRDRETKKSRGFAFLTFRRLADAKNAVKEMNGVILDGKRIKVKQARRPSSLESGSKKRPPSFSRTRGASRILKCGRGGRSRARSGPSCEGNLGGDRYTPNFNVSSSGRHFAVKRNPSSKRDDPPSKRSATSAQTRSNTGLRGREPHRREISRNMPRGEPASSRRDEYPLPRDYGQSSNDRKYESTSRGYCDYGNYHSREESASKVFSDHAGYLGGRDRDFSEYLSGNSYRDTYRSYGRFHEAPSARGGNNRYDDYSNSQDGYGGRGEPYISNRSNIYSSDYERSGRQEVLPPPIDREYFDREGRQERGHSPKDGLYSASRESYSSNTKIWGIPWRSWRKQI.

Residues 8–86 form the RRM domain; sequence GKIFIGGLNI…KRIKVKQARR (79 aa). 2 disordered regions span residues 82–226 and 279–358; these read KQAR…STSR and HEAP…YSAS. Polar residues predominate over residues 166-178; sequence RSATSAQTRSNTG. Basic and acidic residues-rich tracts occupy residues 180 to 190 and 333 to 351; these read RGREPHRREIS and IDREYFDREGRQERGHSPK.

In terms of assembly, interacts with SRSF3/SRP20, SRSF9/SRP30, SRSF5/SRP40, and SRSF6/SRP55; this interaction inhibits SRSF family member pre-mRNA splicing. Interacts with splicing factor proteins and KHDRBS3. Testis-specific.

Its subcellular location is the nucleus. Functionally, RNA-binding protein involved in pre-mRNA splicing. Required for sperm development. Acts additively with TRA2B to promote exon 7 inclusion of the survival motor neuron SMN. Binds non-specifically to mRNAs. The polypeptide is RNA-binding motif protein, Y chromosome (Mus musculus (Mouse)).